Consider the following 92-residue polypeptide: MARSVWKGPFVDGYLFGKAEASRASGRNEVIKIWSRRSTILPQFVGLTFGVYNGHKFLPVQVTENMVGHKFGEFSPTRTYTGHGSDKKSKRG.

The interval 72–92 (GEFSPTRTYTGHGSDKKSKRG) is disordered.

This sequence belongs to the universal ribosomal protein uS19 family.

In terms of biological role, protein S19 forms a complex with S13 that binds strongly to the 16S ribosomal RNA. The polypeptide is Small ribosomal subunit protein uS19 (Gluconobacter oxydans (strain 621H) (Gluconobacter suboxydans)).